The sequence spans 237 residues: 2-C-methyl-D-erythritol 4-phosphate cytidylyltransferase (237 aa).

Belongs to the IspD/TarI cytidylyltransferase family. IspD subfamily.

The catalysed reaction is 2-C-methyl-D-erythritol 4-phosphate + CTP + H(+) = 4-CDP-2-C-methyl-D-erythritol + diphosphate. Its pathway is isoprenoid biosynthesis; isopentenyl diphosphate biosynthesis via DXP pathway; isopentenyl diphosphate from 1-deoxy-D-xylulose 5-phosphate: step 2/6. Functionally, catalyzes the formation of 4-diphosphocytidyl-2-C-methyl-D-erythritol from CTP and 2-C-methyl-D-erythritol 4-phosphate (MEP). The chain is 2-C-methyl-D-erythritol 4-phosphate cytidylyltransferase from Paraburkholderia xenovorans (strain LB400).